The chain runs to 248 residues: UDP-2,3-diacylglucosamine hydrolase (248 aa).

Mn(2+) is bound by residues aspartate 8, histidine 10, aspartate 41, asparagine 79, and histidine 114. Residue 79 to 80 (NR) coordinates substrate. Positions 122, 160, 171, 174, and 202 each coordinate substrate. Positions 202 and 204 each coordinate Mn(2+).

It belongs to the LpxH family. Mn(2+) serves as cofactor.

The protein resides in the cell inner membrane. The enzyme catalyses UDP-2-N,3-O-bis[(3R)-3-hydroxytetradecanoyl]-alpha-D-glucosamine + H2O = 2-N,3-O-bis[(3R)-3-hydroxytetradecanoyl]-alpha-D-glucosaminyl 1-phosphate + UMP + 2 H(+). It functions in the pathway glycolipid biosynthesis; lipid IV(A) biosynthesis; lipid IV(A) from (3R)-3-hydroxytetradecanoyl-[acyl-carrier-protein] and UDP-N-acetyl-alpha-D-glucosamine: step 4/6. Hydrolyzes the pyrophosphate bond of UDP-2,3-diacylglucosamine to yield 2,3-diacylglucosamine 1-phosphate (lipid X) and UMP by catalyzing the attack of water at the alpha-P atom. Involved in the biosynthesis of lipid A, a phosphorylated glycolipid that anchors the lipopolysaccharide to the outer membrane of the cell. The protein is UDP-2,3-diacylglucosamine hydrolase of Stenotrophomonas maltophilia (strain K279a).